The sequence spans 408 residues: Voltage-gated potassium channel subunit beta-1 (408 aa).

The NADP(+) site is built by Thr-97, Trp-98, Gln-104, and Asp-126. Residue Tyr-131 is the Proton donor/acceptor of the active site. NADP(+) is bound by residues Asn-199, Ser-229, Arg-230, Gln-255, Trp-284, Ser-285, Pro-286, Leu-287, Ala-288, Cys-289, Lys-295, Arg-305, Gly-364, Ser-366, Gln-370, Glu-373, and Asn-374.

It belongs to the shaker potassium channel beta subunit family. Homotetramer. Interaction with tetrameric potassium channel alpha subunits gives rise to a heterooctamer. Identified in potassium channel complexes containing KCNA1, KCNA2, KCNA4, KCNA5, KCNA6, KCNAB1 and KCNAB2. Part of a complex containing KCNA1, KCNA4 and LGI1; interaction with LGI1 inhibits down-regulation of KCNA1 channel activity. Interacts with the dimer formed by GNB1 and GNG2; this enhances KCNA1 binding. Interacts with SQSTM1. In terms of tissue distribution, expression most abundant in aorta. Also high in left ventricle. Also detected in right ventricle, atrium, brain, skeletal muscle and kidney. Not detected in liver.

Its subcellular location is the cytoplasm. The protein localises to the membrane. It is found in the cell membrane. The enzyme catalyses a primary alcohol + NADP(+) = an aldehyde + NADPH + H(+). It carries out the reaction a secondary alcohol + NADP(+) = a ketone + NADPH + H(+). Functionally, regulatory subunit of the voltage-gated potassium (Kv) Shaker channels composed of pore-forming and potassium-conducting alpha subunits and of regulatory beta subunits. The beta-1/KCNAB1 cytoplasmic subunit mediates closure of delayed rectifier potassium channels by physically obstructing the pore via its N-terminal domain and increases the speed of channel closure for other family members. Promotes the inactivation of Kv1.1/KCNA1, Kv1.2/KCNA2, Kv1.4/KCNA4, Kv1.5/KCNA5 and Kv1.6/KCNA6 alpha subunit-containing channels. Displays nicotinamide adenine dinucleotide phosphate (NADPH)-dependent aldoketoreductase activity by catalyzing the NADPH-dependent reduction of a variety of endogenous aldehydes and ketones. The binding of NADPH is required for efficient down-regulation of potassium channel activity. Oxidation of the bound NADPH restrains N-terminal domain from blocking the channel, thereby decreasing N-type inactivation of potassium channel activity. The sequence is that of Voltage-gated potassium channel subunit beta-1 (KCNAB1) from Mustela putorius (European polecat).